The sequence spans 362 residues: Peptide chain release factor 1 (362 aa).

The residue at position 236 (Gln-236) is an N5-methylglutamine.

Belongs to the prokaryotic/mitochondrial release factor family. Methylated by PrmC. Methylation increases the termination efficiency of RF1.

The protein localises to the cytoplasm. Its function is as follows. Peptide chain release factor 1 directs the termination of translation in response to the peptide chain termination codons UAG and UAA. The chain is Peptide chain release factor 1 from Lactobacillus johnsonii (strain CNCM I-12250 / La1 / NCC 533).